Reading from the N-terminus, the 395-residue chain is Proteinase-activated receptor 4 (395 aa).

Positions 1 to 16 (MCWPLLYPLMLGFSIS) are cleaved as a signal peptide. Residues 17 to 58 (PAECQTPSIYDDVESTREGQEASLRPTVELNESKSPDKPNPR) constitute a propeptide, removed for receptor activation. The segment at 46 to 66 (LNESKSPDKPNPRGFPGKPCA) is disordered. Residues 47-56 (NESKSPDKPN) are compositionally biased toward basic and acidic residues. The Extracellular portion of the chain corresponds to 59-93 (GFPGKPCANNSDTLELPASSEALLLGWVPTRLVPA). A glycan (N-linked (GlcNAc...) asparagine) is linked at asparagine 67. A helical membrane pass occupies residues 94 to 114 (IYGLVVVVGLPANGLALWVLA). Residues 115-119 (TRVPR) are Cytoplasmic-facing. A helical membrane pass occupies residues 120–140 (LPSTILLMNLAVADLLLALVL). Topologically, residues 141 to 161 (PPRLVYHLRGQRWPFGEAACR) are extracellular. The cysteines at positions 160 and 239 are disulfide-linked. The chain crosses the membrane as a helical span at residues 162–182 (VATAALYGHMYGSVLLLAAVS). The Cytoplasmic segment spans residues 183-203 (LDRYLALVHSLRARALRGQRL). Residues 204-224 (TTILCLVAWLSAATLVLPLTF) traverse the membrane as a helical segment. Residues 225–254 (HRQTFLLAGSDRMLCHDALPLAEQTSHWRP) lie on the Extracellular side of the membrane. Residues 255–275 (AFICLAVLGCFVPLLAMVLCY) traverse the membrane as a helical segment. At 276-295 (GATLRALAANGQRYSHAVRL) the chain is on the cytoplasmic side. Residues 296–316 (TALVLFSAVAAFTPSNVLLVL) form a helical membrane-spanning segment. The Extracellular segment spans residues 317 to 330 (HYSNPSPEAWGNLY). The helical transmembrane segment at 331–354 (GAYVPSLALSTLNSCVDPFIYYYV) threads the bilayer. Topologically, residues 355 to 395 (SHEFREKVRAMLCRQLKASSSSQASREAGSRGTAICSSTLL) are cytoplasmic.

This sequence belongs to the G-protein coupled receptor 1 family. A proteolytic cleavage generates a new N-terminus that functions as a tethered ligand.

It localises to the cell membrane. Functionally, receptor for activated thrombin or trypsin coupled to G proteins that stimulate phosphoinositide hydrolysis. May play a role in platelets activation. The sequence is that of Proteinase-activated receptor 4 (F2rl3) from Rattus norvegicus (Rat).